Consider the following 100-residue polypeptide: Small ribosomal subunit protein uS14c (100 aa).

It belongs to the universal ribosomal protein uS14 family. Part of the 30S ribosomal subunit.

Its subcellular location is the plastid. In terms of biological role, binds 16S rRNA, required for the assembly of 30S particles. The sequence is that of Small ribosomal subunit protein uS14c (rps14) from Cuscuta reflexa (Southern Asian dodder).